The following is a 303-amino-acid chain: Methionyl-tRNA formyltransferase (303 aa).

108 to 111 (SDLP) provides a ligand contact to (6S)-5,6,7,8-tetrahydrofolate.

This sequence belongs to the Fmt family.

It catalyses the reaction L-methionyl-tRNA(fMet) + (6R)-10-formyltetrahydrofolate = N-formyl-L-methionyl-tRNA(fMet) + (6S)-5,6,7,8-tetrahydrofolate + H(+). Its function is as follows. Attaches a formyl group to the free amino group of methionyl-tRNA(fMet). The formyl group appears to play a dual role in the initiator identity of N-formylmethionyl-tRNA by promoting its recognition by IF2 and preventing the misappropriation of this tRNA by the elongation apparatus. In Rickettsia felis (strain ATCC VR-1525 / URRWXCal2) (Rickettsia azadi), this protein is Methionyl-tRNA formyltransferase.